Consider the following 549-residue polypeptide: Glucose-6-phosphate isomerase (549 aa).

The active-site Proton donor is E355. Residues H387 and K515 contribute to the active site.

This sequence belongs to the GPI family.

The protein resides in the cytoplasm. It carries out the reaction alpha-D-glucose 6-phosphate = beta-D-fructose 6-phosphate. Its pathway is carbohydrate biosynthesis; gluconeogenesis. It participates in carbohydrate degradation; glycolysis; D-glyceraldehyde 3-phosphate and glycerone phosphate from D-glucose: step 2/4. Its function is as follows. Catalyzes the reversible isomerization of glucose-6-phosphate to fructose-6-phosphate. The polypeptide is Glucose-6-phosphate isomerase (Pasteurella multocida (strain Pm70)).